A 250-amino-acid polypeptide reads, in one-letter code: Probable aquaporin TIP-type RB7-18C (250 aa).

A run of 2 helical transmembrane segments spans residues 20–42 (AYVAEFIATLLFVFAGVGSAIAY) and 55–77 (GLVAVAVAHAFALFVGVSIAANI). The NPA 1 motif lies at 83–85 (NPA). The next 3 helical transmembrane spans lie at 97–119 (TILTGFFYWIAQLLGSTVACLLL), 140–162 (FQGVVMEIIITFALVYTVYATAA), and 172–194 (IAPIAIGFIVGANILAAGPFSGG). The NPA 2 signature appears at 197 to 199 (NPA). The helical transmembrane segment at 215–237 (WIYWAGPLIGGGLAGFIYGDVFI) threads the bilayer.

It belongs to the MIP/aquaporin (TC 1.A.8) family. TIP (TC 1.A.8.10) subfamily. Roots.

It localises to the vacuole membrane. In terms of biological role, channel protein in tonoplast. These proteins may allow the diffusion of amino acids and/or peptides from the vacuolar compartment to the cytoplasm. The protein is Probable aquaporin TIP-type RB7-18C of Nicotiana tabacum (Common tobacco).